Reading from the N-terminus, the 394-residue chain is GPI transamidase component GAB1 (394 aa).

Topologically, residues 1–135 (MDSTALKVAL…TLLSCISRSS (135 aa)) are cytoplasmic. The helical transmembrane segment at 136 to 156 (IIFTNFAISSSLYCILAEGNV) threads the bilayer. Over 157 to 160 (LLSS) the chain is Lumenal. A helical membrane pass occupies residues 161 to 181 (VMISISGYLSVYPILLLIPLL). Residues 182-190 (GMLKSWRQR) lie on the Cytoplasmic side of the membrane. Residues 191-211 (ILSAIVSILSLLILLLFSYSI) form a helical membrane-spanning segment. The Lumenal segment spans residues 212 to 224 (LGSQSWSFLTQVY). A helical transmembrane segment spans residues 225–245 (GSIITFEKVFPNLGLWWYFFI). Residues 235-255 (PNLGLWWYFFIEMFDTFIPFF) are may be involved in recognition of long-chain fatty acids in GPI. Topologically, residues 246 to 250 (EMFDT) are cytoplasmic. The chain crosses the membrane as a helical span at residues 251-271 (FIPFFKAVFNIFIAVFITPFT). At 272 to 297 (LRYHKQPFYAFILCIGWIVLTKPYPS) the chain is on the lumenal side. The chain crosses the membrane as a helical span at residues 298–318 (LGDAGFFFSFLPFFTPLFGYL). Residues 319–324 (RYPIIS) are Cytoplasmic-facing. Residues 325–345 (ALLFLHAIVLAPIFYHLWVVL) traverse the membrane as a helical segment. The Lumenal segment spans residues 346–351 (GSGNSN). The chain crosses the membrane as a helical span at residues 352 to 372 (FFYAISLVYALAIASILVDLN). Residues 373 to 394 (WAMLRIEYDNGIPNFKLKVTQI) lie on the Cytoplasmic side of the membrane.

The protein belongs to the PIGU family. Forms a complex with GPI16, GPI17, GPI8 and GAA1.

It is found in the endoplasmic reticulum membrane. It functions in the pathway glycolipid biosynthesis; glycosylphosphatidylinositol-anchor biosynthesis. Component of the GPI transamidase complex. May be involved in the recognition of either the GPI attachment signal or the lipid portion of GPI. In Saccharomyces cerevisiae (strain ATCC 204508 / S288c) (Baker's yeast), this protein is GPI transamidase component GAB1 (GAB1).